The primary structure comprises 442 residues: Dol-P-Man:Man(5)GlcNAc(2)-PP-Dol alpha-1,3-mannosyltransferase (442 aa).

Residues 1 to 34 (MAAPSSRPESNPPLYKQALDFALDVANGRHALSK) are Lumenal-facing. Residues 35–55 (LIPPALFLVDALLCGLIIWKV) form a helical membrane-spanning segment. The Cytoplasmic portion of the chain corresponds to 56–84 (PYTEIDWAAYMEQVSQILSGERDYTKVRG). A helical membrane pass occupies residues 85-105 (GTGPLVYPAAHVYIYTGLYHL). Residues 106–111 (TDEGRN) lie on the Lumenal side of the membrane. Residues 112-132 (ILLAQQLFAGLYMVTLAVVMG) traverse the membrane as a helical segment. Over 133-155 (CYWQAKAPPYLFPLLTLSKRLHS) the chain is Cytoplasmic. Residues 156-176 (IFVLRCFNDCFAVLFLWLAIF) form a helical membrane-spanning segment. Residues 177-198 (FFQRRNWQAGALLYTLGLGVKM) lie on the Lumenal side of the membrane. The helical transmembrane segment at 199–219 (TLLLSLPAVGIVLFLGSGSFV) threads the bilayer. Position 220 (Thr-220) is a topological domain, cytoplasmic. Residues 221–241 (TLQLVATMGLVQILIGVPFLA) traverse the membrane as a helical segment. Residues 242–272 (HYPTEYLSRAFELSRQFFFKWTVNWRFVGEE) lie on the Lumenal side of the membrane. The helical transmembrane segment at 273–293 (IFLSKGFALTLLALHVLVLGI) threads the bilayer. Over 294–333 (FITTRWIKPARKSLVQLISPVLLAGKPPLTVPEHRAAARD) the chain is Cytoplasmic. Residues 334–354 (VTPRYIMTTILSANAVGLLFA) form a helical membrane-spanning segment. Residues 355 to 376 (RSLHYQFYAYVAWSTPFLLWRA) lie on the Lumenal side of the membrane. A helical transmembrane segment spans residues 377-397 (GLHPVLVYLLWAVHEWAWNVF). The Cytoplasmic segment spans residues 398-401 (PSTP). A helical transmembrane segment spans residues 402-422 (ASSAVVVGVLGVTVAGVWFGA). Residues 423-442 (REEWEPGMKSSSKKEEAAMR) are Lumenal-facing.

Belongs to the glycosyltransferase ALG3 family.

The protein localises to the endoplasmic reticulum membrane. The catalysed reaction is an alpha-D-Man-(1-&gt;2)-alpha-D-Man-(1-&gt;2)-alpha-D-Man-(1-&gt;3)-[alpha-D-Man-(1-&gt;6)]-beta-D-Man-(1-&gt;4)-beta-D-GlcNAc-(1-&gt;4)-alpha-D-GlcNAc-diphospho-di-trans,poly-cis-dolichol + a di-trans,poly-cis-dolichyl beta-D-mannosyl phosphate = an alpha-D-Man-(1-&gt;2)-alpha-D-Man-(1-&gt;2)-alpha-D-Man-(1-&gt;3)-[alpha-D-Man-(1-&gt;3)-alpha-D-Man-(1-&gt;6)]-beta-D-Man-(1-&gt;4)-beta-D-GlcNAc-(1-&gt;4)-alpha-D-GlcNAc-diphospho-di-trans,poly-cis-dolichol + a di-trans,poly-cis-dolichyl phosphate + H(+). It functions in the pathway protein modification; protein glycosylation. Its function is as follows. Dol-P-Man:Man(5)GlcNAc(2)-PP-Dol alpha-1,3-mannosyltransferase that operates in the biosynthetic pathway of dolichol-linked oligosaccharides, the glycan precursors employed in protein asparagine (N)-glycosylation. The assembly of dolichol-linked oligosaccharides begins on the cytosolic side of the endoplasmic reticulum membrane and finishes in its lumen. The sequential addition of sugars to dolichol pyrophosphate produces dolichol-linked oligosaccharides containing fourteen sugars, including two GlcNAcs, nine mannoses and three glucoses. Once assembled, the oligosaccharide is transferred from the lipid to nascent proteins by oligosaccharyltransferases. In the lumen of the endoplasmic reticulum, adds the first dolichyl beta-D-mannosyl phosphate derived mannose in an alpha-1,3 linkage to Man(5)GlcNAc(2)-PP-dolichol to produce Man(6)GlcNAc(2)-PP-dolichol. In Neurospora crassa (strain ATCC 24698 / 74-OR23-1A / CBS 708.71 / DSM 1257 / FGSC 987), this protein is Dol-P-Man:Man(5)GlcNAc(2)-PP-Dol alpha-1,3-mannosyltransferase (alg-3).